The sequence spans 377 residues: 5-hydroxytryptamine receptor 1D (377 aa).

N-linked (GlcNAc...) asparagine glycosylation is found at Asn5, Asn17, and Asn21. Helical transmembrane passes span 39–64 (ISLA…TTIL), 76–97 (LIGS…ISIA), and 110–134 (LCDI…VIAL). The cysteines at positions 111 and 188 are disulfide-linked. The serotonin site is built by Asp118 and Cys122. Positions 135–137 (DRY) match the DRY motif; important for ligand-induced conformation changes motif. Helical transmembrane passes span 155–176 (AAAM…PLFW), 195–218 (ISYT…VLYG), 301–326 (KTLG…VLPI), and 336–359 (GLFD…YTVF). Ser321 contacts serotonin. Positions 352–356 (NPIIY) match the NPxxY motif; important for ligand-induced conformation changes and signaling motif.

Belongs to the G-protein coupled receptor 1 family. As to quaternary structure, homodimer. Heterodimer with HTR1B.

It localises to the cell membrane. In terms of biological role, G-protein coupled receptor for 5-hydroxytryptamine (serotonin). Also functions as a receptor for ergot alkaloid derivatives, various anxiolytic and antidepressant drugs and other psychoactive substances. Ligand binding causes a conformation change that triggers signaling via guanine nucleotide-binding proteins (G proteins) and modulates the activity of downstream effectors, such as adenylate cyclase. HTR1D is coupled to G(i)/G(o) G alpha proteins and mediates inhibitory neurotransmission by inhibiting adenylate cyclase activity. Regulates the release of 5-hydroxytryptamine in the brain, and thereby affects neural activity. May also play a role in regulating the release of other neurotransmitters. May play a role in vasoconstriction. This is 5-hydroxytryptamine receptor 1D (HTR1D) from Oryctolagus cuniculus (Rabbit).